A 1518-amino-acid polypeptide reads, in one-letter code: WD repeat-containing protein 62 (1518 aa).

Ala-2 is subject to N-acetylalanine. The residue at position 33 (Ser-33) is a Phosphoserine. Phosphothreonine is present on Thr-46. Residue Ser-49 is modified to Phosphoserine. Thr-50 bears the Phosphothreonine mark. Ser-52 bears the Phosphoserine mark. 12 WD repeats span residues 109-150 (TARK…QVAE), 153-194 (GHKY…VVAS), 196-234 (KVSC…ETKV), 291-330 (INLK…YLAN), 357-396 (AVYP…RVGK), 402-450 (FHSS…DSHW), 490-529 (DVKA…ELVK), 532-574 (AHDA…NLEQ), 578-618 (DHSS…DGLH), 626-665 (AEKT…QKKC), 671-713 (GDEG…KMFG), and 714-752 (HSEI…TNCM). Ser-501 is modified (phosphoserine). The span at 762–772 (RQQQQHTNDKK) shows a compositional bias: basic and acidic residues. 2 disordered regions span residues 762–824 (RQQQ…DPDP) and 908–935 (ASLL…KESS). The segment covering 781-790 (TYVSTPSEIH) has biased composition (polar residues). The segment covering 797–809 (QTEDDLEEECEPE) has biased composition (acidic residues). A WD 13 repeat occupies 803 to 846 (EEECEPEEMLKTPSKDSLDPDPRCLLTNGKLPLWAKRLLGDDDV). Residues 810-824 (EMLKTPSKDSLDPDP) show a composition bias toward basic and acidic residues. A compositionally biased stretch (low complexity) spans 908-920 (ASLLSESESPQEA). Ser-944 is subject to Phosphoserine. Residues 962–1055 (EVEAGPGDQQ…PSSSLPQTPE (94 aa)) form a disordered region. Composition is skewed to polar residues over residues 971–981 (QGDSYLRVSSD) and 1045–1054 (VPSSSLPQTP). A Phosphothreonine modification is found at Thr-1053. Ser-1070, Ser-1093, Ser-1101, Ser-1123, Ser-1144, Ser-1228, Ser-1248, and Ser-1249 each carry phosphoserine. One copy of the WD 14 repeat lies at 1132–1173 (GGSQPRAGTGYASPDRTHVLAAGKAEETLEAWRPPPPCLTSL). A WD 15 repeat occupies 1255–1293 (SLGQELQAITTATTPSLDSEGQEPALRSWGNHEARANLR). Residue Thr-1268 is modified to Phosphothreonine. The segment at 1339–1377 (FRPSLPAPESPGLPAHPSNPQLPEARPGIPGGTASLLEP) is disordered.

Can form homodimers (via C-terminus). Interacts (via C-terminus) with MAPKBP1 (via C-terminus). Interacts with CDK5RAP2, CEP152, CEP63 and KIAA0753. CEP63, CDK5RAP2, CEP152, WDR62 are proposed to form a stepwise assembled complex at the centrosome forming a ring near parental centrioles. In terms of tissue distribution, present in fetal brain, enriched within the ventricular and subventricular zone (at protein level). In the embryonic brain it is expressed in mitotic neural precursor cells.

It localises to the nucleus. Its subcellular location is the cytoplasm. The protein resides in the cytoskeleton. It is found in the spindle pole. The protein localises to the microtubule organizing center. It localises to the centrosome. Its subcellular location is the centriole. Required for cerebral cortical development. Plays a role in neuronal proliferation and migration. Plays a role in mother-centriole-dependent centriole duplication; the function also seems to involve CEP152, CDK5RAP2 and CEP63 through a stepwise assembled complex at the centrosome that recruits CDK2 required for centriole duplication. This is WD repeat-containing protein 62 (WDR62) from Homo sapiens (Human).